Consider the following 253-residue polypeptide: Protein C1orf43 (253 aa).

The chain crosses the membrane as a helical span at residues 11–31 (VNVVLVMAYGSLVFVLLFIFV).

It localises to the membrane. It is found in the golgi apparatus. The protein localises to the mitochondrion. General regulator of phagocytosis. Required to uptake Gram negative bacterium by macrophages. The chain is Protein C1orf43 (C1orf43) from Homo sapiens (Human).